The following is an 839-amino-acid chain: Autophagy-related protein 9A (839 aa).

Residues 1-21 (MAQFDTEYQRLEASYSDSPPG) are disordered. N-acetylalanine is present on alanine 2. The Cytoplasmic segment spans residues 2–61 (AQFDTEYQRLEASYSDSPPGEEDLLVHVPEGSKSPWHHIENLDLFFSRVYNLHQKNGFTC). The Tyrosine-based sorting signal signature appears at 8–11 (YQRL). 3 positions are modified to phosphoserine: serine 14, serine 16, and serine 18. The chain crosses the membrane as a helical span at residues 62 to 84 (MLIGEIFELMQFLFVVAFTTFLV). Residues 85–128 (SCVDYDILFANKMVNHSLHPTEPVKVTLPDAFLPAQVCSARIQE) are Lumenal-facing. Asparagine 99 is a glycosylation site (N-linked (GlcNAc...) asparagine). Residues 129–154 (NGSLITILVIAGVFWVHRLIKFIYNI) traverse the membrane as a helical segment. Residues 155-290 (CCYWEIHSFY…ELAQRLSNRI (136 aa)) lie on the Cytoplasmic side of the membrane. The stretch at 291 to 301 (LWIGIANFLLC) is an intramembrane region. The Cytoplasmic segment spans residues 302 to 319 (PLILIWQILYAFFSYAEV). The stretch at 320–328 (LKREPGALG) is an intramembrane region. At 329-371 (ARCWSLYGRCYLRHFNELEHELQSRLNRGYKPASKYMNCFLSP) the chain is on the cytoplasmic side. Residues 372–397 (LLTLLAKNCAFFAGSILAVLIALTIY) form a helical membrane-spanning segment. Residues 398 to 406 (DEDVLAVEH) are Lumenal-facing. A helical membrane pass occupies residues 407 to 424 (VLTTVTLLGVTVTVCRSF). Over 425–470 (IPDQHMVFCPEQLLRVILAHIHYMPDHWQGNAHRSQTRDEFAQLFQ) the chain is Cytoplasmic. Residues 471 to 480 (YKAVFILEEL) lie within the membrane without spanning it. Over 481–483 (LSP) the chain is Cytoplasmic. An intramembrane segment occupies 484-492 (IVTPLILIF). The Cytoplasmic segment spans residues 493–839 (CLRPRALEII…DELPPQVHKV (347 aa)). Serine 656, serine 735, serine 738, serine 741, and serine 828 each carry phosphoserine. 2 disordered regions span residues 656 to 688 (SPLQPGQAPTGRAPSTMTGSGVDARTASSGSSV) and 719 to 839 (QQAQ…VHKV). Positions 724 to 736 (EPERHVWHRRESD) are enriched in basic and acidic residues. 2 stretches are compositionally biased toward acidic residues: residues 737–747 (ESGESAPEEGG) and 823–832 (VPEEGSEDEL).

The protein belongs to the ATG9 family. Homotrimer; forms a homotrimer with a central pore that forms a path between the two membrane leaflets. Interacts (via cytoplasmic its C-terminus) with ATG2A. Interacts with SUPT20H. Interacts (via the tyrosine-based sorting signal motif) with AP4M1; promoting association with the AP-4 complex. Interacts with ARFIP1 and ARFIP2. Interacts with PI4K2A and PI4KB. Interacts with ATG4A; the interaction is direct and promotes ATG9A trafficking. In terms of processing, ufmylated in a DDRGK1 dependent manner.

The protein localises to the preautophagosomal structure membrane. It localises to the cytoplasmic vesicle. It is found in the autophagosome membrane. Its subcellular location is the golgi apparatus. The protein resides in the trans-Golgi network membrane. The protein localises to the late endosome membrane. It localises to the recycling endosome membrane. It is found in the endoplasmic reticulum membrane. Its subcellular location is the mitochondrion membrane. It catalyses the reaction a 1,2-diacyl-sn-glycero-3-phosphocholine(in) = a 1,2-diacyl-sn-glycero-3-phosphocholine(out). It carries out the reaction a 1,2-diacyl-sn-glycero-3-phospho-L-serine(in) = a 1,2-diacyl-sn-glycero-3-phospho-L-serine(out). The enzyme catalyses a 1,2-diacyl-sn-glycero-3-phosphoethanolamine(in) = a 1,2-diacyl-sn-glycero-3-phosphoethanolamine(out). Its function is as follows. Phospholipid scramblase involved in autophagy by mediating autophagosomal membrane expansion. Cycles between the preautophagosomal structure/phagophore assembly site (PAS) and the cytoplasmic vesicle pool and supplies membrane for the growing autophagosome. Lipid scramblase activity plays a key role in preautophagosomal structure/phagophore assembly by distributing the phospholipids that arrive through ATG2 (ATG2A or ATG2B) from the cytoplasmic to the luminal leaflet of the bilayer, thereby driving autophagosomal membrane expansion. Also required to supply phosphatidylinositol 4-phosphate to the autophagosome initiation site by recruiting the phosphatidylinositol 4-kinase beta (PI4KB) in a process dependent on ARFIP2, but not ARFIP1. In addition to autophagy, also plays a role in necrotic cell death. The protein is Autophagy-related protein 9A of Bos taurus (Bovine).